The following is a 634-amino-acid chain: Chaperone protein DnaK (634 aa).

The residue at position 197 (Thr197) is a Phosphothreonine; by autocatalysis. Positions 515–528 (LHKEDDKKRKESVD) are enriched in basic and acidic residues. Disordered stretches follow at residues 515–536 (LHKEDDKKRKESVDARNGADAI) and 595–634 (YKAASAGKNAGGTAGGNGNAGSNGNSGAKKDDDVIDAEVE). The segment covering 603-615 (NAGGTAGGNGNAG) has biased composition (gly residues).

The protein belongs to the heat shock protein 70 family.

Acts as a chaperone. The chain is Chaperone protein DnaK from Campylobacter hominis (strain ATCC BAA-381 / DSM 21671 / CCUG 45161 / LMG 19568 / NCTC 13146 / CH001A).